We begin with the raw amino-acid sequence, 312 residues long: MGSFEDRKATGTVFNIQKYSVHDGPGIRTIVFLKGCPLSCKWCSNPESQASHPQVAYNKGRCIGCHRCIKACEHDAITVNEDGTLSLDRGKCDVCKTLDCAHACPAQGMIIYGENKTVDQILKEVEKDALFYARSGGGMTLSGGEPLMHADIALPLLREARHRRIKTAIETCGCIPWDTLKEAAPYLNYVLFDVKQMDSEKHREGVGVGNELILSNLKKLLTEFPNLHVQVRTPIIPGFNDNDEFAYALGEFLKGYENVGYEALPYHRLGTQKYDFLSREYAMGDVSLPDGVAQRIQRIVDETRGAVTEEKK.

In terms of domain architecture, Radical SAM core spans 22 to 309 (HDGPGIRTIV…VDETRGAVTE (288 aa)). [4Fe-4S] cluster-binding residues include Cys36, Cys40, Cys43, Cys62, Cys65, Cys68, Cys72, Cys92, Cys95, Cys100, and Cys104. 42–44 (WCS) contacts S-adenosyl-L-methionine. 4Fe-4S ferredoxin-type domains follow at residues 53–82 (PQVAYNKGRCIGCHRCIKACEHDAITVNED) and 83–115 (GTLSLDRGKCDVCKTLDCAHACPAQGMIIYGEN). S-adenosyl-L-methionine contacts are provided by residues Gly144, 193 to 195 (DVK), and His267.

It belongs to the organic radical-activating enzymes family. Monomer. [4Fe-4S] cluster is required as a cofactor.

The enzyme catalyses glycyl-[protein] + reduced [flavodoxin] + S-adenosyl-L-methionine = glycin-2-yl radical-[protein] + semiquinone [flavodoxin] + 5'-deoxyadenosine + L-methionine + H(+). It functions in the pathway organosulfur degradation; alkanesulfonate degradation. Functionally, involved in an anaerobic respiration pathway that converts the sulfonate taurine (2-aminoethanesulfonate) to ammonia, acetate and sulfide. Catalyzes activation of the isethionate sulfite-lyase IslA under anaerobic conditions by generation of an organic free radical on a glycine residue, via a homolytic cleavage of S-adenosyl-L-methionine (SAM). The sequence is that of Isethionate sulfite-lyase activating enzyme from Bilophila wadsworthia (strain 3_1_6).